The primary structure comprises 115 residues: UPF0738 protein SAB0871 (115 aa).

Belongs to the UPF0738 family.

In Staphylococcus aureus (strain bovine RF122 / ET3-1), this protein is UPF0738 protein SAB0871.